The chain runs to 224 residues: UPF0758 protein IL0240 (224 aa).

The region spanning 102 to 224 (GFTEPTMVKD…PISFAERGLL (123 aa)) is the MPN domain. Zn(2+) contacts are provided by H173, H175, and D186. The short motif at 173–186 (HNHPSGVAEPSQAD) is the JAMM motif element.

This sequence belongs to the UPF0758 family.

The protein is UPF0758 protein IL0240 of Idiomarina loihiensis (strain ATCC BAA-735 / DSM 15497 / L2-TR).